The following is a 352-amino-acid chain: E3 ubiquitin-protein ligase RNF146 (352 aa).

The RING-type zinc finger occupies 36-74 (CAICLQTCVHPVSLPCKHVFCYLCVKGASWLGKRCALCR). Glycyl lysine isopeptide (Lys-Gly) (interchain with G-Cter in ubiquitin) cross-links involve residues Lys84 and Lys94. A WWE domain is found at 91 to 167 (EELKAASRGN…EHGRRRKIKR (77 aa)). Residues Tyr107, Arg110, and Trp114 each contribute to the a glycoprotein site. Residue Lys130 forms a Glycyl lysine isopeptide (Lys-Gly) (interchain with G-Cter in ubiquitin) linkage. A glycoprotein contacts are provided by Tyr144, Gln153, Arg163, and Lys175. Lys175 is covalently cross-linked (Glycyl lysine isopeptide (Lys-Gly) (interchain with G-Cter in ubiquitin)). Disordered regions lie at residues 195–242 (SSAD…AGAS), 259–293 (ERSH…ASSD), and 317–352 (NQTV…VTEV). The span at 197–210 (ADGADSGSAHTGAS) shows a compositional bias: low complexity. The segment covering 215-233 (VPSSTRPLTSVDGQLTSPV) has biased composition (polar residues). The span at 282–293 (STEETESDASSD) shows a compositional bias: acidic residues. Residues Ser288 and Ser292 each carry the phosphoserine modification.

As to quaternary structure, can form homooligomers. Interacts with PARsylated AXIN1, AXIN2, BLZF1, CASC3, H1-2, IPO7, LIG3, NCL, PARP1, XRCC1, XRCC5 and XRCC6. Interacts with DDB1, DHX15, IQGAP1, LRPPRC, PARP2, PRKDC, RUVBL2, TNKS1 and TNKS2. Binding often leads to interactor ubiquitination, in the presence of the appropriate E1 and E2 enzymes, and proteasomal degradation. Post-translationally, ubiquitinated; autoubiquitinated. Autoubiquitination is enhanced upon poly(ADP-ribose)-binding.

It localises to the cytoplasm. The protein resides in the cytosol. The protein localises to the nucleus. The enzyme catalyses S-ubiquitinyl-[E2 ubiquitin-conjugating enzyme]-L-cysteine + [acceptor protein]-L-lysine = [E2 ubiquitin-conjugating enzyme]-L-cysteine + N(6)-ubiquitinyl-[acceptor protein]-L-lysine.. The protein operates within protein modification; protein ubiquitination. Its function is as follows. E3 ubiquitin-protein ligase that specifically binds poly-ADP-ribosylated (PARsylated) proteins and mediates their ubiquitination and subsequent degradation. May regulate many important biological processes, such as cell survival and DNA damage response. Acts as an activator of the Wnt signaling pathway by mediating the ubiquitination of PARsylated AXIN1 and AXIN2, 2 key components of the beta-catenin destruction complex. Acts in cooperation with tankyrase proteins (TNKS and TNKS2), which mediate PARsylation of target proteins AXIN1, AXIN2, BLZF1, CASC3, TNKS and TNKS2. Recognizes and binds tankyrase-dependent PARsylated proteins via its WWE domain and mediates their ubiquitination, leading to their degradation. Different ubiquitin linkage types have been observed: TNKS2 undergoes ubiquitination at 'Lys-48' and 'Lys-63', while AXIN1 is only ubiquitinated at 'Lys-48'. May regulate TNKS and TNKS2 subcellular location, preventing aggregation at a centrosomal location. Neuroprotective protein. Protects the brain against N-methyl-D-aspartate (NMDA) receptor-mediated glutamate excitotoxicity and ischemia, by interfering with PAR-induced cell death, called parthanatos. Prevents nuclear translocation of AIFM1 in a PAR-binding dependent manner. Does not affect PARP1 activation. Protects against cell death induced by DNA damaging agents, such as N-methyl-N-nitro-N-nitrosoguanidine (MNNG) and rescues cells from G1 arrest. Promotes cell survival after gamma-irradiation. Facilitates DNA repair. This Rattus norvegicus (Rat) protein is E3 ubiquitin-protein ligase RNF146 (Rnf146).